The chain runs to 353 residues: L-tryptophan dehydrogenase (353 aa).

Arg44 contributes to the NAD(+) binding site. Catalysis depends on Lys80, which acts as the Proton donor/acceptor. NAD(+) is bound by residues Asp114, Thr146, 176–181 (GLGNVG), Lys204, and 255–257 (AAN).

The protein belongs to the Glu/Leu/Phe/Val dehydrogenases family. Homodimer.

The catalysed reaction is L-tryptophan + NAD(+) + H2O = indole-3-pyruvate + NH4(+) + NADH + H(+). Its activity is regulated as follows. Highly susceptible to inhibition by indole-3-pyruvate. Activity is not affected by the presence of metal ions, EDTA, KCl or DMSO. Functionally, catalyzes the reversible oxidative deamination of L-tryptophan to indole-3-pyruvate in the presence of NAD(+). Shows weak activity with L-phenylalanine, but cannot use other L-amino acids and D-Trp. Cannot use NADP(+) for oxidative deamination of L-Trp, and shows only weak activity with NADPH for reductive amination of indole-3-pyruvate. Involved in the biosynthesis of scytonemin, a cyanobacterial radiation-absorbing pigment. The protein is L-tryptophan dehydrogenase of Nostoc punctiforme.